The primary structure comprises 461 residues: MVFFWRKSDVEKKAEKGDKNAILELIKQGKKEKAEKILKKYASQREDLAELLFELYVQEGKLVQAYPLLKKYGDKIGKAKERAKVYQAVGEYQKAIEEFLKVGDFESLYNVAKIYHQLEKPDKALEYAQRAEKLVPYEKKEELENFITQLKKELGLIEEKKESILDKLRRGLQKTKEAVEFGVLFRGRKVDEEFFEELEEMLVKADVGVKTAVELTEKLRKEAIRKNIKEGEKIKELLKKELKELLKNCQGELKIPEKVGAVLLFVGVNGSGKTTTIGKLAHQLKQKGKKVLLVAGDTFRAAAIEQLEVWAKRAGVDIVKKEEGSDPGAVVYEGMKKAKEEGYEVVLVDTAGRLHTKEPLINELRKIKKVIQKFDKEEPSETLLVIDATTGQNAIQQAKVFKEAVDITGIVVTKLDGSAKGGAVVAICRELKIPIKLVGVGEGIDDLQPFDADAYVEALLE.

Residues 105–138 form a TPR repeat; sequence FESLYNVAKIYHQLEKPDKALEYAQRAEKLVPYE. GTP contacts are provided by residues 267-274, 349-353, and 413-416; these read GVNGSGKT, DTAGR, and TKLD.

Belongs to the GTP-binding SRP family. FtsY subfamily. Part of the signal recognition particle protein translocation system, which is composed of SRP and FtsY.

Its subcellular location is the cell inner membrane. It localises to the cytoplasm. The enzyme catalyses GTP + H2O = GDP + phosphate + H(+). In terms of biological role, involved in targeting and insertion of nascent membrane proteins into the cytoplasmic membrane. Acts as a receptor for the complex formed by the signal recognition particle (SRP) and the ribosome-nascent chain (RNC). This is Signal recognition particle receptor FtsY from Aquifex aeolicus (strain VF5).